The chain runs to 304 residues: Ribokinase (304 aa).

Substrate-binding positions include 12–14 (NVD), 41–45 (GKGAN), and Glu142. Residues Asn186 and 222-227 (TLGKQG) each bind ATP. Residues Asp248 and Thr250 each coordinate K(+). ATP is bound by residues 253-254 (GD) and Asn279. A substrate-binding site is contributed by Asp254. Asp254 (proton acceptor) is an active-site residue. Residues Thr285, Lys288, Gly290, and Ser294 each contribute to the K(+) site.

It belongs to the carbohydrate kinase PfkB family. Ribokinase subfamily. Homodimer. It depends on Mg(2+) as a cofactor.

The protein localises to the cytoplasm. It carries out the reaction D-ribose + ATP = D-ribose 5-phosphate + ADP + H(+). It functions in the pathway carbohydrate metabolism; D-ribose degradation; D-ribose 5-phosphate from beta-D-ribopyranose: step 2/2. Its activity is regulated as follows. Activated by a monovalent cation that binds near, but not in, the active site. The most likely occupant of the site in vivo is potassium. Ion binding induces a conformational change that may alter substrate affinity. Functionally, catalyzes the phosphorylation of ribose at O-5 in a reaction requiring ATP and magnesium. The resulting D-ribose-5-phosphate can then be used either for sythesis of nucleotides, histidine, and tryptophan, or as a component of the pentose phosphate pathway. The protein is Ribokinase of Staphylococcus aureus (strain COL).